Consider the following 213-residue polypeptide: Small ribosomal subunit protein uS4 (213 aa).

The interval 16–53 (GTDLGLKSGVKPYDVKTKKSARPPGQHGVSRNKSSEYS) is disordered. Polar residues predominate over residues 44–53 (VSRNKSSEYS). Positions 97–163 (SRLDNVVYRM…EKSREQLRIK (67 aa)) constitute an S4 RNA-binding domain.

The protein belongs to the universal ribosomal protein uS4 family. In terms of assembly, part of the 30S ribosomal subunit. Contacts protein S5. The interaction surface between S4 and S5 is involved in control of translational fidelity.

Its function is as follows. One of the primary rRNA binding proteins, it binds directly to 16S rRNA where it nucleates assembly of the body of the 30S subunit. Functionally, with S5 and S12 plays an important role in translational accuracy. The protein is Small ribosomal subunit protein uS4 of Psychrobacter cryohalolentis (strain ATCC BAA-1226 / DSM 17306 / VKM B-2378 / K5).